The following is a 319-amino-acid chain: Acetyl-coenzyme A carboxylase carboxyl transferase subunit alpha (319 aa).

The region spanning 39–293 (RLQKKSNDLT…KAVLEKQLHE (255 aa)) is the CoA carboxyltransferase C-terminal domain.

It belongs to the AccA family. As to quaternary structure, acetyl-CoA carboxylase is a heterohexamer composed of biotin carboxyl carrier protein (AccB), biotin carboxylase (AccC) and two subunits each of ACCase subunit alpha (AccA) and ACCase subunit beta (AccD).

It is found in the cytoplasm. It catalyses the reaction N(6)-carboxybiotinyl-L-lysyl-[protein] + acetyl-CoA = N(6)-biotinyl-L-lysyl-[protein] + malonyl-CoA. It functions in the pathway lipid metabolism; malonyl-CoA biosynthesis; malonyl-CoA from acetyl-CoA: step 1/1. Component of the acetyl coenzyme A carboxylase (ACC) complex. First, biotin carboxylase catalyzes the carboxylation of biotin on its carrier protein (BCCP) and then the CO(2) group is transferred by the carboxyltransferase to acetyl-CoA to form malonyl-CoA. The chain is Acetyl-coenzyme A carboxylase carboxyl transferase subunit alpha from Neisseria meningitidis serogroup C / serotype 2a (strain ATCC 700532 / DSM 15464 / FAM18).